The following is a 564-amino-acid chain: O-fucosyltransferase 6 (564 aa).

Residues 17 to 37 (LLPFICAVSGALLILFALLSI) form a helical; Signal-anchor for type II membrane protein membrane-spanning segment. 2 N-linked (GlcNAc...) asparagine glycosylation sites follow: asparagine 95 and asparagine 139. Residue 277–279 (HLR) participates in substrate binding. A glycan (N-linked (GlcNAc...) asparagine) is linked at asparagine 449. The span at 501–512 (MDSRKFGKKEQK) shows a compositional bias: basic and acidic residues. The interval 501 to 542 (MDSRKFGKKEQKEDEDAELSSSETDYEEDQTDLQDRGLYNGT) is disordered. Over residues 513–532 (EDEDAELSSSETDYEEDQTD) the composition is skewed to acidic residues. N-linked (GlcNAc...) asparagine glycosylation is present at asparagine 540.

It belongs to the glycosyltransferase GT106 family.

It localises to the membrane. Its pathway is glycan metabolism. The sequence is that of O-fucosyltransferase 6 from Arabidopsis thaliana (Mouse-ear cress).